The sequence spans 332 residues: Tryptophan--tRNA ligase (332 aa).

Residues 13-15 and 21-22 each bind ATP; these read KPS and GN. The short motif at 14-22 is the 'HIGH' region element; it reads PSGDLTLGN. Residue aspartate 137 coordinates L-tryptophan. ATP-binding positions include 149 to 151, isoleucine 188, and 197 to 201; these read GKD and KMSKS. The short motif at 197 to 201 is the 'KMSKS' region element; that stretch reads KMSKS.

The protein belongs to the class-I aminoacyl-tRNA synthetase family. Homodimer.

The protein localises to the cytoplasm. The enzyme catalyses tRNA(Trp) + L-tryptophan + ATP = L-tryptophyl-tRNA(Trp) + AMP + diphosphate + H(+). In terms of biological role, catalyzes the attachment of tryptophan to tRNA(Trp). The protein is Tryptophan--tRNA ligase of Clostridium perfringens (strain 13 / Type A).